The primary structure comprises 174 residues: Guided entry of tail-anchored proteins factor 1 (174 aa).

Over 1–8 the chain is Lumenal; that stretch reads MSAAEADR. Residues 9–29 traverse the membrane as a helical segment; that stretch reads WAWLLVLSFVFGCNVLRILLP. At 30–99 the chain is on the cytoplasmic side; that stretch reads SFSFFMSRVL…VKARTAQLAK (70 aa). Residues 39–94 adopt a coiled-coil conformation; that stretch reads LQKDAEQESQMRAEIQGMKQELSTVNMMDEFARYARLERKINKMTDKLKTHVKART. Residues 39-97 form an interaction with GET3/TRC40 region; it reads LQKDAEQESQMRAEIQGMKQELSTVNMMDEFARYARLERKINKMTDKLKTHVKARTAQL. A helical transmembrane segment spans residues 100–120; the sequence is IKWVISVAFYILQAALMVSLI. Over 121–148 the chain is Lumenal; sequence WKYYSVPVAVVPSKWITPLDRLVAFPTR. A helical membrane pass occupies residues 149–169; sequence VAGGVGITCWILVCNKVVAIV. The Cytoplasmic segment spans residues 170–174; it reads LHPFS.

It belongs to the WRB/GET1 family. As to quaternary structure, component of the Golgi to ER traffic (GET) complex, which is composed of GET1/WRB, CAMLG/GET2 and GET3. Within the complex, GET1 and CAMLG form a heterotetramer which is stabilized by phosphatidylinositol binding and which binds to the GET3 homodimer. Interacts with CAMLG (via C-terminus). GET3 shows a higher affinity for CAMLG than for GET1.

The protein localises to the endoplasmic reticulum membrane. Functionally, required for the post-translational delivery of tail-anchored (TA) proteins to the endoplasmic reticulum. Together with CAMLG/GET2, acts as a membrane receptor for soluble GET3/TRC40, which recognizes and selectively binds the transmembrane domain of TA proteins in the cytosol. Required to ensure correct topology and ER insertion of CAMLG. In Bos taurus (Bovine), this protein is Guided entry of tail-anchored proteins factor 1.